Reading from the N-terminus, the 77-residue chain is Acyl carrier protein (77 aa).

A Carrier domain is found at 2–77 (SDIEQRVKNV…LAIDYVKSHQ (76 aa)). An O-(pantetheine 4'-phosphoryl)serine modification is found at Ser-37.

The protein belongs to the acyl carrier protein (ACP) family. 4'-phosphopantetheine is transferred from CoA to a specific serine of apo-ACP by AcpS. This modification is essential for activity because fatty acids are bound in thioester linkage to the sulfhydryl of the prosthetic group.

The protein resides in the cytoplasm. It functions in the pathway lipid metabolism; fatty acid biosynthesis. Functionally, carrier of the growing fatty acid chain in fatty acid biosynthesis. This chain is Acyl carrier protein, found in Leucothrix mucor.